Here is a 427-residue protein sequence, read N- to C-terminus: MPIIEQVGAREILDSRGNPTVEVEVALTDGTFARAAVPSGASTGEHEAVELRDGGSRYGGKGVEKAVEAVLDEIAPQVIGLSADDQRLVDQALLDLDGTPDKSRLGANAILGVSLAVSKAAAESAGLPLFRYIGGPNAHILPVPMMNILNGGAHADTGVDVQEFMVAPIGAPSFKEALRWGAEVYHSLKSVLKNQGLATGLGDEGGFAPDVAGTKAALDLISSAIEATGLKLGSDVALALDVAATEFYTEGSGYAFEKETRTAEQMAEFYAGLLDSYPLVSIEDPLSEDDWDGWVSLTAAIGDRIQLVGDDLFVTNPERLEDGIQRGAANALLVKVNQIGTLTETLDAVSLAHNSGYRTMMSHRSGETEDTTIADLAVAVGSGQIKTGAPARSERVAKYNQLLRIEETLGDAARYAGDLAFPRLEAK.

Q162 is a (2R)-2-phosphoglycerate binding site. Residue E204 is the Proton donor of the active site. Positions 241, 283, and 310 each coordinate Mg(2+). 4 residues coordinate (2R)-2-phosphoglycerate: K335, R364, S365, and K386. K335 serves as the catalytic Proton acceptor.

It belongs to the enolase family. Requires Mg(2+) as cofactor.

It is found in the cytoplasm. The protein localises to the secreted. The protein resides in the cell surface. It catalyses the reaction (2R)-2-phosphoglycerate = phosphoenolpyruvate + H2O. Its pathway is carbohydrate degradation; glycolysis; pyruvate from D-glyceraldehyde 3-phosphate: step 4/5. Catalyzes the reversible conversion of 2-phosphoglycerate (2-PG) into phosphoenolpyruvate (PEP). It is essential for the degradation of carbohydrates via glycolysis. The polypeptide is Enolase (Mycolicibacterium smegmatis (strain ATCC 700084 / mc(2)155) (Mycobacterium smegmatis)).